A 340-amino-acid chain; its full sequence is Glycerol-3-phosphate dehydrogenase [NAD(P)+] (340 aa).

The NADPH site is built by S11, W12, R32, R33, and K106. K106, G138, and S140 together coordinate sn-glycerol 3-phosphate. Residue A142 coordinates NADPH. Residues K193, D246, S256, R257, and N258 each contribute to the sn-glycerol 3-phosphate site. The active-site Proton acceptor is the K193. NADPH is bound at residue R257. V281 and E283 together coordinate NADPH.

The protein belongs to the NAD-dependent glycerol-3-phosphate dehydrogenase family.

The protein resides in the cytoplasm. The catalysed reaction is sn-glycerol 3-phosphate + NAD(+) = dihydroxyacetone phosphate + NADH + H(+). It carries out the reaction sn-glycerol 3-phosphate + NADP(+) = dihydroxyacetone phosphate + NADPH + H(+). It functions in the pathway membrane lipid metabolism; glycerophospholipid metabolism. Functionally, catalyzes the reduction of the glycolytic intermediate dihydroxyacetone phosphate (DHAP) to sn-glycerol 3-phosphate (G3P), the key precursor for phospholipid synthesis. The protein is Glycerol-3-phosphate dehydrogenase [NAD(P)+] of Shouchella clausii (strain KSM-K16) (Alkalihalobacillus clausii).